A 132-amino-acid polypeptide reads, in one-letter code: UPF0251 protein PTH_0588 (132 aa).

The protein belongs to the UPF0251 family.

This Pelotomaculum thermopropionicum (strain DSM 13744 / JCM 10971 / SI) protein is UPF0251 protein PTH_0588.